Consider the following 356-residue polypeptide: uncharacterized protein (356 aa).

6 helical membrane-spanning segments follow: residues 2–22, 35–55, 76–96, 99–119, 124–144, and 151–171; these read FEAI…FHRL, EYVT…PIPF, NMIY…FIFG, IIYG…GPFL, IISL…LALL, and VEIL…AITF. One can recognise a GGDEF domain in the interval 218-353; sequence QSLALLLIDI…GRNKVMFNPI (136 aa).

Its subcellular location is the cell membrane. This is an uncharacterized protein from Staphylococcus epidermidis (strain ATCC 35984 / DSM 28319 / BCRC 17069 / CCUG 31568 / BM 3577 / RP62A).